A 472-amino-acid polypeptide reads, in one-letter code: Eukaryotic translation initiation factor 2 subunit 3 (472 aa).

N-acetylalanine; partial is present on alanine 2. A tr-type G domain is found at glutamine 39–leucine 247. The G1 stretch occupies residues glycine 48–serine 55. Alanine 51–threonine 56 provides a ligand contact to GTP. The tract at residues asparagine 76–lysine 80 is G2. The G3 stretch occupies residues aspartate 134–glycine 137. GTP is bound by residues asparagine 190–aspartate 193 and serine 225–glutamine 227. Positions asparagine 190–aspartate 193 are G4. The G5 stretch occupies residues serine 225 to glutamine 227. The interacts with CDC123 stretch occupies residues glycine 457 to valine 469.

This sequence belongs to the TRAFAC class translation factor GTPase superfamily. Classic translation factor GTPase family. EIF2G subfamily. In terms of assembly, eukaryotic translation initiation factor 2 eIF2 is a heterotrimeric complex composed of an alpha (EIF2S1), a beta (EIF2S2) and a gamma (EIF2S3) chain. eIF2 is member of the 43S pre-initiation complex (43S PIC).

Its subcellular location is the cytoplasm. It is found in the cytosol. The enzyme catalyses GTP + H2O = GDP + phosphate + H(+). Member of the eIF2 complex that functions in the early steps of protein synthesis by forming a ternary complex with GTP and initiator tRNA. This complex binds to a 40S ribosomal subunit, followed by mRNA binding to form the 43S pre-initiation complex (43S PIC). Junction of the 60S ribosomal subunit to form the 80S initiation complex is preceded by hydrolysis of the GTP bound to eIF2 and release of an eIF2-GDP binary complex. In order for eIF2 to recycle and catalyze another round of initiation, the GDP bound to eIF2 must exchange with GTP by way of a reaction catalyzed by eIF-2B. The chain is Eukaryotic translation initiation factor 2 subunit 3 (EIF2S3) from Gallus gallus (Chicken).